A 569-amino-acid polypeptide reads, in one-letter code: MNKKFKKIVTEKKLTDAERIKENSNYLRGTITDDLKNEITNGFTGDNFSLIRFHGMYQQDDRDLRIERNEQKLEPRYAMMLRCRLPGGVIKAKKWLKIDYFASKYTLYGTIRLTNRQTFQFHGILKKNLKDVHKMLHSIGLDSLATANDVNRNVLCTSNPMESLIHQEAYEWARKISNFLLPHTKAYAEIWLDQKKIVTTEKEPILGKTYLPRKFKTTVVIPPYNDVDLYANDMNFVAITKNEKIIGFNILIGGGLSFIHGNKNTWPFLATEIGYISVENTLSIAKAIVTTQRDWGNRTDRANAKTRYTINNFGLNEFKKEIEKRANVNLKPVREYSFISRGDRFGWIKDINNNWSLTLFIQNGRIYDDNDKLFKSGLLKIANIHDGNFRITSNQNIIISEVSEKNKNKIEKIALSSGLINKSTNLRKNSMACVSFPTCPLAMAEAERMLSFFITQLENIMLKYGVEDEVIILRVSGCPNGCGRSLLAEIGLIGKSIGRYNLYIGGNRIGNRIPKIYKENITEQEILIHLKYLIKTWSNERKNKEDFGDFIVRKEFVKEVINPVYDFWS.

[4Fe-4S] cluster-binding residues include Cys433, Cys439, Cys478, and Cys482. Cys482 contributes to the siroheme binding site.

This sequence belongs to the nitrite and sulfite reductase 4Fe-4S domain family. As to quaternary structure, alpha(8)-beta(8). The alpha component is a flavoprotein, the beta component is a hemoprotein. Siroheme serves as cofactor. Requires [4Fe-4S] cluster as cofactor.

The enzyme catalyses hydrogen sulfide + 3 NADP(+) + 3 H2O = sulfite + 3 NADPH + 4 H(+). It functions in the pathway sulfur metabolism; hydrogen sulfide biosynthesis; hydrogen sulfide from sulfite (NADPH route): step 1/1. Its function is as follows. Component of the sulfite reductase complex that catalyzes the 6-electron reduction of sulfite to sulfide. This is one of several activities required for the biosynthesis of L-cysteine from sulfate. The sequence is that of Sulfite reductase [NADPH] hemoprotein beta-component from Buchnera aphidicola subsp. Acyrthosiphon pisum (strain 5A).